Consider the following 959-residue polypeptide: Protovillin (959 aa).

The tail stretch occupies residues 1-53 (MEPPLELPTQRKRVIPSKFGILKRNAEIEAEKNRENLQQSSCFSHINEIGKEI). Positions 54 to 832 (GLEIWKIIDD…PIMLPTSGVT (779 aa)) are core. 6 Gelsolin-like repeats span residues 64–116 (STIQ…SQET), 204–244 (IRVK…LEKG), 309–366 (IKLY…DQRT), 479–529 (RNKF…EDKG), 603–647 (INIH…KEAA), and 713–754 (FKVF…TEKL). 2 consecutive repeat copies span residues 840-849 (TPKPITTPTV) and 851-860 (TPKPITTPTV). The tract at residues 840–860 (TPKPITTPTVTTPKPITTPTV) is 2 X 10 AA repeats of T-P-K-P-I-T-T-P-T-V. Residues 895-959 (TTITTFYPLS…KQLRVDNGLF (65 aa)) enclose the HP domain.

The protein belongs to the villin/gelsolin family.

The protein resides in the cytoplasm. It is found in the cytoskeleton. In terms of biological role, caps actin filaments but displays neither severing nor cross-linking nor nucleating activities. Protovillin seems to be a villin precursor with only archaic capping activity. It lacks essential changes in the sequence to allow bundling of actin filaments and consequently the appearance of microvilli. The chain is Protovillin (vilB) from Dictyostelium discoideum (Social amoeba).